Here is a 171-residue protein sequence, read N- to C-terminus: Co-chaperone protein HscB (171 aa).

A J domain is found at 2–74 (DYFTLFGLPA…LTRAEYLLSL (73 aa)).

This sequence belongs to the HscB family. In terms of assembly, interacts with HscA and stimulates its ATPase activity. Interacts with IscU.

Functionally, co-chaperone involved in the maturation of iron-sulfur cluster-containing proteins. Seems to help targeting proteins to be folded toward HscA. This chain is Co-chaperone protein HscB, found in Salmonella typhimurium (strain LT2 / SGSC1412 / ATCC 700720).